Consider the following 474-residue polypeptide: Siroheme synthase (474 aa).

The segment at 1-202 (MEYLPIFIDL…GRPKEANKVL (202 aa)) is precorrin-2 dehydrogenase /sirohydrochlorin ferrochelatase. NAD(+)-binding positions include 22–23 (AV) and 41–42 (PA). Ser126 carries the phosphoserine modification. The uroporphyrinogen-III C-methyltransferase stretch occupies residues 218 to 474 (GHVTLVGAGP…YLINSIINLI (257 aa)). Pro227 is a binding site for S-adenosyl-L-methionine. Asp250 serves as the catalytic Proton acceptor. Lys272 acts as the Proton donor in catalysis. Residues 303–305 (GGD), Ile308, 333–334 (TA), Met385, and Gly414 each bind S-adenosyl-L-methionine.

This sequence in the N-terminal section; belongs to the precorrin-2 dehydrogenase / sirohydrochlorin ferrochelatase family. In the C-terminal section; belongs to the precorrin methyltransferase family.

The enzyme catalyses uroporphyrinogen III + 2 S-adenosyl-L-methionine = precorrin-2 + 2 S-adenosyl-L-homocysteine + H(+). It catalyses the reaction precorrin-2 + NAD(+) = sirohydrochlorin + NADH + 2 H(+). The catalysed reaction is siroheme + 2 H(+) = sirohydrochlorin + Fe(2+). It participates in cofactor biosynthesis; adenosylcobalamin biosynthesis; precorrin-2 from uroporphyrinogen III: step 1/1. Its pathway is cofactor biosynthesis; adenosylcobalamin biosynthesis; sirohydrochlorin from precorrin-2: step 1/1. The protein operates within porphyrin-containing compound metabolism; siroheme biosynthesis; precorrin-2 from uroporphyrinogen III: step 1/1. It functions in the pathway porphyrin-containing compound metabolism; siroheme biosynthesis; siroheme from sirohydrochlorin: step 1/1. It participates in porphyrin-containing compound metabolism; siroheme biosynthesis; sirohydrochlorin from precorrin-2: step 1/1. In terms of biological role, multifunctional enzyme that catalyzes the SAM-dependent methylations of uroporphyrinogen III at position C-2 and C-7 to form precorrin-2 via precorrin-1. Then it catalyzes the NAD-dependent ring dehydrogenation of precorrin-2 to yield sirohydrochlorin. Finally, it catalyzes the ferrochelation of sirohydrochlorin to yield siroheme. The polypeptide is Siroheme synthase (Blochmanniella pennsylvanica (strain BPEN)).